A 449-amino-acid chain; its full sequence is C4-dicarboxylate transport protein (449 aa).

The disordered stretch occupies residues 1-20 (MSALTESFGPVPSAKSKPPA). A compositionally biased stretch (low complexity) spans 10 to 20 (PVPSAKSKPPA). 8 consecutive transmembrane segments (helical) span residues 28–48 (LLYL…WLSP), 66–86 (LIKM…IAHI), 101–121 (LYFE…GNVV), 167–187 (GDIL…MTLG), 205–225 (FGVI…AMAF), 241–261 (LIAV…GLIA), 326–346 (IYMT…LTWT), and 370–390 (FITL…GMAI).

Belongs to the dicarboxylate/amino acid:cation symporter (DAACS) (TC 2.A.23) family.

The protein localises to the cell inner membrane. Functionally, responsible for the transport of dicarboxylates such as succinate, fumarate, and malate from the periplasm across the membrane. In Rhodopseudomonas palustris (strain BisB18), this protein is C4-dicarboxylate transport protein.